The sequence spans 501 residues: Spore development regulator VOSA (501 aa).

Disordered stretches follow at residues 26-55 (GQFG…GQEP), 67-88 (PQRA…IDPP), and 228-274 (AMTT…DTRG). Residues 35–50 (PPQAETQMSAQASAQA) are compositionally biased toward polar residues. One can recognise a Velvet domain in the interval 52 to 223 (GQEPEPDYKL…SDQGVRLRVR (172 aa)). Composition is skewed to basic and acidic residues over residues 67–85 (PQRA…RKPI) and 237–252 (QHAE…DRKQ). Positions 253 to 271 (TSAVSRHSSINENDSTPTD) are enriched in polar residues. The short motif at 364-371 (MSSHHGYT) is the Nuclear localization signal element. 2 disordered regions span residues 378–455 (FAPH…QQTP) and 474–501 (PGQL…EPGA).

It belongs to the velvet family. VosA subfamily. In terms of assembly, forms a heterodimeric complex with VELB; the formation of the VELB-VOSA complex is light-dependent.

It is found in the nucleus. Functionally, component of the VELB-VOSA heterodimeric complex that plays a dual role in activating genes associated with spore maturation and repressing certain development-associated genes. The complex binds DNA through the DNA-binding domain of VOSA that recognizes an 11-nucleotide consensus sequence 5'-CTGGCCGCGGC-3' consisting of two motifs in the promoters of key developmental regulatory genes. Appears dispensable for the development and pathogenicity. In Pyricularia oryzae (strain 70-15 / ATCC MYA-4617 / FGSC 8958) (Rice blast fungus), this protein is Spore development regulator VOSA.